Reading from the N-terminus, the 162-residue chain is UPF0260 protein Caul_3920 (162 aa).

This sequence belongs to the UPF0260 family.

This is UPF0260 protein Caul_3920 from Caulobacter sp. (strain K31).